The following is a 205-amino-acid chain: MIKRPRRLRTNEVLRKAVRETRLSTDSLIWPLFIVEGKNIKKEISSLPGQYHFSPDMVGKAIEAALKADVKSVLLFGLPKHKDEKGSEAYNENGVLQQGIREIKQRYPQMQVITDICMCEYTSHGHCGILEGERVDNDRTLPYLEKIALSHVMAGADMIAPSDMMDGRIYALRSTLDKNGFTDIPIMSYAVKYASSFYGPFREAA.

Zn(2+) contacts are provided by cysteine 117, cysteine 119, and cysteine 127. Residue lysine 192 is the Schiff-base intermediate with substrate of the active site. Arginine 202 is a binding site for substrate.

It belongs to the ALAD family. In terms of assembly, homooctamer. Zn(2+) is required as a cofactor.

The catalysed reaction is 2 5-aminolevulinate = porphobilinogen + 2 H2O + H(+). It participates in porphyrin-containing compound metabolism; protoporphyrin-IX biosynthesis; coproporphyrinogen-III from 5-aminolevulinate: step 1/4. In terms of biological role, catalyzes an early step in the biosynthesis of tetrapyrroles. Binds two molecules of 5-aminolevulinate per subunit, each at a distinct site, and catalyzes their condensation to form porphobilinogen. The chain is Delta-aminolevulinic acid dehydratase (hemB) from Ruminiclostridium josui (Clostridium josui).